The following is a 140-amino-acid chain: Protein E6 (140 aa).

2 zinc fingers span residues 27–63 and 100–136; these read CIFC…CSEC and CICC…CRNC.

It belongs to the papillomaviridae E6 protein family. In terms of assembly, forms homodimers. Interacts with ubiquitin-protein ligase UBE3A/E6-AP; this interaction stimulates UBE3A ubiquitin activity. Interacts with host BAK1.

The protein resides in the host cytoplasm. It localises to the host nucleus. In terms of biological role, plays a major role in the induction and maintenance of cellular transformation. E6 associates with host UBE3A/E6-AP ubiquitin-protein ligase and modulates its activity. Protects host keratinocytes from apoptosis by mediating the degradation of host BAK1. May also inhibit host immune response. This Human papillomavirus 65 protein is Protein E6.